The primary structure comprises 59 residues: MAKVKITLVKSLIGRKKDQIATVNALGLKKIGNIVQHEETPQISGMIKKVSYLLKVEEA.

This sequence belongs to the universal ribosomal protein uL30 family. Part of the 50S ribosomal subunit.

The chain is Large ribosomal subunit protein uL30 from Clostridium botulinum (strain 657 / Type Ba4).